Consider the following 266-residue polypeptide: Cytochrome c oxidase assembly factor 7 homolog (266 aa).

Sel1-like repeat units follow at residues 32-64 (PEAC…DDYG) and 66-104 (AKSC…NLND). A compositionally biased stretch (low complexity) spans 166–179 (AVTASSGSGTSSPP). Residues 166–187 (AVTASSGSGTSSPPAGQPPLKD) are disordered. One copy of the Sel1-like 3 repeat lies at 212–247 (MYACANLSQMYARGDGIEKNEKEAEKYKKLALEMQD).

This sequence belongs to the hcp beta-lactamase family.

In terms of biological role, required for locomotion. Probably involved in the regulation of formation/maintenance of motor neurons at presynaptic terminals at the neuromuscular junction. This Drosophila melanogaster (Fruit fly) protein is Cytochrome c oxidase assembly factor 7 homolog.